A 169-amino-acid polypeptide reads, in one-letter code: uncharacterized protein (169 aa).

This is an uncharacterized protein from Methanocaldococcus jannaschii (strain ATCC 43067 / DSM 2661 / JAL-1 / JCM 10045 / NBRC 100440) (Methanococcus jannaschii).